The following is a 567-amino-acid chain: tRNA(His) guanylyltransferase 1 (567 aa).

The Mg(2+) site is built by Asp-342, Gly-343, and Asp-389. Residues 342–347 and 388–389 contribute to the GTP site; these read DGCHFH and SD. Residues Lys-397 and Lys-403 each participate in a glycyl lysine isopeptide (Lys-Gly) (interchain with G-Cter in ubiquitin) cross-link.

It belongs to the tRNA(His) guanylyltransferase family. Mg(2+) serves as cofactor.

It is found in the nucleus. It localises to the nucleoplasm. It carries out the reaction a 5'-end ribonucleotide-tRNA(His) + GTP + ATP + H2O = a 5'-end phospho-guanosine-ribonucleotide-tRNA(His) + AMP + 2 diphosphate + H(+). In terms of biological role, adds a GMP to the 5'-end of tRNA(His) after transcription and RNase P cleavage. The chain is tRNA(His) guanylyltransferase 1 (THG1) from Arabidopsis thaliana (Mouse-ear cress).